Reading from the N-terminus, the 101-residue chain is Large ribosomal subunit protein uL6m (101 aa).

The protein belongs to the universal ribosomal protein uL6 family.

It is found in the mitochondrion. This chain is Large ribosomal subunit protein uL6m (RPL6), found in Marchantia polymorpha (Common liverwort).